The primary structure comprises 322 residues: Cytochrome c biogenesis protein CcsA (322 aa).

Helical transmembrane passes span 9-29, 44-64, 71-91, 143-163, 226-246, 255-275, and 287-307; these read IFTH…LITL, GMIV…IYSG, LYES…VPYF, MILS…LLVI, VISL…VWAN, WDPK…YLHI, and AIVA…VNLL.

The protein belongs to the CcmF/CycK/Ccl1/NrfE/CcsA family. As to quaternary structure, may interact with Ccs1.

It is found in the plastid. The protein localises to the chloroplast thylakoid membrane. Required during biogenesis of c-type cytochromes (cytochrome c6 and cytochrome f) at the step of heme attachment. This Lactuca sativa (Garden lettuce) protein is Cytochrome c biogenesis protein CcsA.